A 163-amino-acid chain; its full sequence is Nucleotide-binding protein YajQ (163 aa).

This sequence belongs to the YajQ family.

In terms of biological role, nucleotide-binding protein. This is Nucleotide-binding protein YajQ from Escherichia coli (strain K12 / DH10B).